Reading from the N-terminus, the 543-residue chain is CTP synthase (543 aa).

The tract at residues 1-270 (MNNLTSTKFI…DTQILKHFNI (270 aa)) is amidoligase domain. A CTP-binding site is contributed by Ser-18. Residue Ser-18 participates in UTP binding. Residues 19 to 24 (SLGKGL) and Asp-76 each bind ATP. 2 residues coordinate Mg(2+): Asp-76 and Glu-144. Residues 151 to 153 (DIE), 191 to 196 (KTKPTQ), and Lys-227 each bind CTP. Residues 191-196 (KTKPTQ) and Lys-227 each bind UTP. In terms of domain architecture, Glutamine amidotransferase type-1 spans 295–537 (TIAIIGKYIK…IQASLNYQET (243 aa)). Gly-356 contributes to the L-glutamine binding site. Cys-383 functions as the Nucleophile; for glutamine hydrolysis in the catalytic mechanism. L-glutamine contacts are provided by residues 384–387 (MGMQ), Glu-407, and Arg-462. Active-site residues include His-510 and Glu-512.

It belongs to the CTP synthase family. As to quaternary structure, homotetramer.

It catalyses the reaction UTP + L-glutamine + ATP + H2O = CTP + L-glutamate + ADP + phosphate + 2 H(+). It carries out the reaction L-glutamine + H2O = L-glutamate + NH4(+). The enzyme catalyses UTP + NH4(+) + ATP = CTP + ADP + phosphate + 2 H(+). It participates in pyrimidine metabolism; CTP biosynthesis via de novo pathway; CTP from UDP: step 2/2. Its activity is regulated as follows. Allosterically activated by GTP, when glutamine is the substrate; GTP has no effect on the reaction when ammonia is the substrate. The allosteric effector GTP functions by stabilizing the protein conformation that binds the tetrahedral intermediate(s) formed during glutamine hydrolysis. Inhibited by the product CTP, via allosteric rather than competitive inhibition. Its function is as follows. Catalyzes the ATP-dependent amination of UTP to CTP with either L-glutamine or ammonia as the source of nitrogen. Regulates intracellular CTP levels through interactions with the four ribonucleotide triphosphates. In Ehrlichia ruminantium (strain Gardel), this protein is CTP synthase.